Here is a 501-residue protein sequence, read N- to C-terminus: Probable Xaa-Pro aminopeptidase pepP (501 aa).

The segment at 1–25 is disordered; sequence MNYHSFLPLRRSSLSHSTTPPSKSR. Over residues 12–25 the composition is skewed to polar residues; it reads SSLSHSTTPPSKSR. Mn(2+) contacts are provided by aspartate 298, aspartate 309, glutamate 432, and glutamate 472.

The protein belongs to the peptidase M24B family. Mn(2+) serves as cofactor.

It catalyses the reaction Release of any N-terminal amino acid, including proline, that is linked to proline, even from a dipeptide or tripeptide.. Functionally, catalyzes the removal of a penultimate prolyl residue from the N-termini of peptides. The protein is Probable Xaa-Pro aminopeptidase pepP (pepP) of Metarhizium acridum (strain CQMa 102).